The following is a 513-amino-acid chain: Serine/threonine-protein kinase pakH (513 aa).

Residues 42–294 (FEIQEKLGEG…PSQLLDHPFI (253 aa)) enclose the Protein kinase domain. Residues 48 to 56 (LGEGSFGSV) and Lys71 contribute to the ATP site. Asp163 (proton acceptor) is an active-site residue. Residues 313 to 358 (KSKKRKSIGPSVSPKQQPNDNNNNNNNNKPQFLSKLLNNNSNSSND) form a disordered region. The span at 331–357 (NDNNNNNNNNKPQFLSKLLNNNSNSSN) shows a compositional bias: low complexity. Residues 493 to 512 (IVLYSTLGLILVLSVFFKFF) form a helical membrane-spanning segment.

This sequence belongs to the protein kinase superfamily. STE Ser/Thr protein kinase family. STE20 subfamily. Requires Mg(2+) as cofactor.

Its subcellular location is the membrane. It carries out the reaction L-seryl-[protein] + ATP = O-phospho-L-seryl-[protein] + ADP + H(+). The catalysed reaction is L-threonyl-[protein] + ATP = O-phospho-L-threonyl-[protein] + ADP + H(+). In Dictyostelium discoideum (Social amoeba), this protein is Serine/threonine-protein kinase pakH (pakH-1).